The following is a 476-amino-acid chain: Bifunctional protein GlmU (476 aa).

The tract at residues M1–R232 is pyrophosphorylase. UDP-N-acetyl-alpha-D-glucosamine-binding positions include L9 to G12, K23, Q75, and G80 to T81. D105 is a binding site for Mg(2+). The UDP-N-acetyl-alpha-D-glucosamine site is built by G142, E157, N172, and N230. N230 lines the Mg(2+) pocket. The linker stretch occupies residues A233–D253. Residues G254 to Q476 form an N-acetyltransferase region. Positions 353 and 371 each coordinate UDP-N-acetyl-alpha-D-glucosamine. Residue H383 is the Proton acceptor of the active site. Residues Y386 and N397 each contribute to the UDP-N-acetyl-alpha-D-glucosamine site. Acetyl-CoA contacts are provided by residues N406–Y407, S425, A443, and R460.

In the N-terminal section; belongs to the N-acetylglucosamine-1-phosphate uridyltransferase family. It in the C-terminal section; belongs to the transferase hexapeptide repeat family. In terms of assembly, homotrimer. Mg(2+) serves as cofactor.

The protein localises to the cytoplasm. The catalysed reaction is alpha-D-glucosamine 1-phosphate + acetyl-CoA = N-acetyl-alpha-D-glucosamine 1-phosphate + CoA + H(+). It catalyses the reaction N-acetyl-alpha-D-glucosamine 1-phosphate + UTP + H(+) = UDP-N-acetyl-alpha-D-glucosamine + diphosphate. The protein operates within nucleotide-sugar biosynthesis; UDP-N-acetyl-alpha-D-glucosamine biosynthesis; N-acetyl-alpha-D-glucosamine 1-phosphate from alpha-D-glucosamine 6-phosphate (route II): step 2/2. It functions in the pathway nucleotide-sugar biosynthesis; UDP-N-acetyl-alpha-D-glucosamine biosynthesis; UDP-N-acetyl-alpha-D-glucosamine from N-acetyl-alpha-D-glucosamine 1-phosphate: step 1/1. It participates in bacterial outer membrane biogenesis; LPS lipid A biosynthesis. Catalyzes the last two sequential reactions in the de novo biosynthetic pathway for UDP-N-acetylglucosamine (UDP-GlcNAc). The C-terminal domain catalyzes the transfer of acetyl group from acetyl coenzyme A to glucosamine-1-phosphate (GlcN-1-P) to produce N-acetylglucosamine-1-phosphate (GlcNAc-1-P), which is converted into UDP-GlcNAc by the transfer of uridine 5-monophosphate (from uridine 5-triphosphate), a reaction catalyzed by the N-terminal domain. This chain is Bifunctional protein GlmU, found in Geobacter metallireducens (strain ATCC 53774 / DSM 7210 / GS-15).